The chain runs to 240 residues: 4-hydroxy-tetrahydrodipicolinate reductase (240 aa).

NAD(+) contacts are provided by residues alanine 79 to threonine 81 and serine 103 to methionine 106. The Proton donor/acceptor role is filled by histidine 135. Histidine 136 serves as a coordination point for (S)-2,3,4,5-tetrahydrodipicolinate. Catalysis depends on lysine 139, which acts as the Proton donor. Glycine 145–threonine 146 provides a ligand contact to (S)-2,3,4,5-tetrahydrodipicolinate.

Belongs to the DapB family.

The protein resides in the cytoplasm. The catalysed reaction is (S)-2,3,4,5-tetrahydrodipicolinate + NAD(+) + H2O = (2S,4S)-4-hydroxy-2,3,4,5-tetrahydrodipicolinate + NADH + H(+). It catalyses the reaction (S)-2,3,4,5-tetrahydrodipicolinate + NADP(+) + H2O = (2S,4S)-4-hydroxy-2,3,4,5-tetrahydrodipicolinate + NADPH + H(+). It participates in amino-acid biosynthesis; L-lysine biosynthesis via DAP pathway; (S)-tetrahydrodipicolinate from L-aspartate: step 4/4. Functionally, catalyzes the conversion of 4-hydroxy-tetrahydrodipicolinate (HTPA) to tetrahydrodipicolinate. The sequence is that of 4-hydroxy-tetrahydrodipicolinate reductase from Staphylococcus aureus (strain Mu3 / ATCC 700698).